Reading from the N-terminus, the 158-residue chain is Protein BTG2 (158 aa).

The residue at position 147 (Ser-147) is a Phosphoserine; by MAPK1 and MAPK3. Position 149 is a phosphoserine; by MAPK14 (Ser-149).

This sequence belongs to the BTG family. As to quaternary structure, interacts with PRKCABP. Interacts with CNOT7 and CNOT8; indicative for an association with the CCR4-NOT complex. Interacts with PIN1, inducing mitochondrial depolarization. Post-translationally, phosphorylated at Ser-147 by MAPK1/ERK2 and MAPK3/ERK1, and at Ser-149 by MAPK14, leading to PIN1-binding and mitochondrial depolarization.

Its function is as follows. Anti-proliferative protein; the function is mediated by association with deadenylase subunits of the CCR4-NOT complex. Activates mRNA deadenylation in a CNOT6 and CNOT7-dependent manner. In vitro can inhibit deadenylase activity of CNOT7 and CNOT8. Involved in cell cycle regulation. Could be involved in the growth arrest and differentiation of the neuronal precursors. Modulates transcription regulation mediated by ESR1. Involved in mitochondrial depolarization and neurite outgrowth. This is Protein BTG2 (BTG2) from Homo sapiens (Human).